The sequence spans 411 residues: 1-deoxy-D-xylulose 5-phosphate reductoisomerase (411 aa).

Positions 12, 13, 14, 15, and 127 each coordinate NADPH. Residue Lys128 participates in 1-deoxy-D-xylulose 5-phosphate binding. NADPH is bound at residue Glu129. Position 153 (Asp153) interacts with Mn(2+). 1-deoxy-D-xylulose 5-phosphate is bound by residues Ser154, Glu155, Ser189, and His212. Glu155 serves as a coordination point for Mn(2+). Position 218 (Gly218) interacts with NADPH. Residues Ser225, Asn230, Lys231, and Glu234 each contribute to the 1-deoxy-D-xylulose 5-phosphate site. Position 234 (Glu234) interacts with Mn(2+).

This sequence belongs to the DXR family. Requires Mg(2+) as cofactor. Mn(2+) serves as cofactor.

It carries out the reaction 2-C-methyl-D-erythritol 4-phosphate + NADP(+) = 1-deoxy-D-xylulose 5-phosphate + NADPH + H(+). It participates in isoprenoid biosynthesis; isopentenyl diphosphate biosynthesis via DXP pathway; isopentenyl diphosphate from 1-deoxy-D-xylulose 5-phosphate: step 1/6. In terms of biological role, catalyzes the NADPH-dependent rearrangement and reduction of 1-deoxy-D-xylulose-5-phosphate (DXP) to 2-C-methyl-D-erythritol 4-phosphate (MEP). This chain is 1-deoxy-D-xylulose 5-phosphate reductoisomerase, found in Colwellia psychrerythraea (strain 34H / ATCC BAA-681) (Vibrio psychroerythus).